The chain runs to 655 residues: Methylenetetrahydrofolate reductase (NADPH) (655 aa).

The tract at residues M1–E39 is disordered. S10, S18, S19, S20, S22, S24, S25, S28, and S29 each carry phosphoserine. Residues P11–G35 are compositionally biased toward low complexity. A Phosphothreonine modification is found at T33. Catalysis depends on E62, which acts as the Proton donor/acceptor. NAD(+) is bound by residues E62 to R67 and T93 to W94. T93 carries the phosphothreonine modification. T93–W94 lines the FAD pocket. S102 is subject to Phosphoserine. Residues H126, R156–D158, Y173–A174, Y196, H200–G203, D209, and K216 contribute to the FAD site. D158 contributes to the substrate binding site. Residues Q227, Y320, and R324 each coordinate substrate. Phosphoserine is present on S393. T450 carries the post-translational modification Phosphothreonine. Residues N455, A460–T463, T480–Q484, T559, and T572 each bind S-adenosyl-L-methionine.

Belongs to the methylenetetrahydrofolate reductase family. Homodimer. The cofactor is FAD. Phosphorylation of an N-terminal serine-rich phosphorylation region increases sensitivity to S-adenosylmethionine and inhibition.

The catalysed reaction is (6S)-5-methyl-5,6,7,8-tetrahydrofolate + NADP(+) = (6R)-5,10-methylene-5,6,7,8-tetrahydrofolate + NADPH + H(+). It participates in one-carbon metabolism; tetrahydrofolate interconversion. With respect to regulation, allosterically regulated by S-adenosylmethionine (SAM). Catalyzes the conversion of 5,10-methylenetetrahydrofolate to 5-methyltetrahydrofolate, a cosubstrate for homocysteine remethylation to methionine. Represents a key regulatory connection between the folate and methionine cycles. The chain is Methylenetetrahydrofolate reductase (NADPH) (MTHFR) from Bos taurus (Bovine).